A 164-amino-acid polypeptide reads, in one-letter code: Transcription antitermination protein NusB (164 aa).

It belongs to the NusB family.

Involved in transcription antitermination. Required for transcription of ribosomal RNA (rRNA) genes. Binds specifically to the boxA antiterminator sequence of the ribosomal RNA (rrn) operons. This Mycolicibacterium gilvum (strain PYR-GCK) (Mycobacterium gilvum (strain PYR-GCK)) protein is Transcription antitermination protein NusB.